A 305-amino-acid polypeptide reads, in one-letter code: Ribonuclease Z (305 aa).

The Zn(2+) site is built by His-61, His-63, Asp-65, His-66, His-141, Asp-209, and His-268. Asp-65 (proton acceptor) is an active-site residue.

This sequence belongs to the RNase Z family. As to quaternary structure, homodimer. Zn(2+) serves as cofactor.

It carries out the reaction Endonucleolytic cleavage of RNA, removing extra 3' nucleotides from tRNA precursor, generating 3' termini of tRNAs. A 3'-hydroxy group is left at the tRNA terminus and a 5'-phosphoryl group is left at the trailer molecule.. Its function is as follows. Zinc phosphodiesterase, which displays some tRNA 3'-processing endonuclease activity. Probably involved in tRNA maturation, by removing a 3'-trailer from precursor tRNA. The protein is Ribonuclease Z of Clostridioides difficile (strain 630) (Peptoclostridium difficile).